The following is a 400-amino-acid chain: Deoxyguanosinetriphosphate triphosphohydrolase-like protein (400 aa).

The 143-residue stretch at 73-215 (RLTHSIEVSQ…AAIADDIAYN (143 aa)) folds into the HD domain.

This sequence belongs to the dGTPase family. Type 2 subfamily.

This is Deoxyguanosinetriphosphate triphosphohydrolase-like protein from Bartonella quintana (strain Toulouse) (Rochalimaea quintana).